We begin with the raw amino-acid sequence, 704 residues long: MARQVALDKVRNIGIMAHIDAGKTTTTERILYYTGRLHKMGEVHEGGATMDWMEQEKERGITITSAATTCFWTPKFGNYSGVNHRINIIDTPGHVDFTVEVERSLRVLDGAVALFCAVGGVEPQSETVWRQANKYGVPRIAYVNKMDRTGADFFNAVKAIRERLGANPVPIQIPIGEGEMFAGFVDLIRMKGIIYDKEDGSTYEEVAIPHDLENEARTWRINMLEAVSELDETLLEKYLNGDDITEEEIRSVLRQATLNVSIIPVLCGSSFKNKGVQFMLDAVIDYLASPVDDGVVEGHDPRTEEEIVRQPKDEEPFAALAFKIATDPFVGKLTFFRVYSGVLNAGSYVLNSVTGKKERVGRVLQMHSNKREERDAVYAGDIAAAVGLKEVRTGDTLCDENKPIVLEKMVFPEPVIEIAVEPKTKADNDKLGMSLAKLAEEDPTFRVKTDEETGQTLIAGMGELHLEVLVDRLKREFKVEANVGQPQVAYRETIRGTVEHEGKFVRQSGGKGQFGLVVLRLEPLEEGKGYEFVDEIKGGAIPKEYIPSVNAGIQQAMKDGVVAGFPMQDVKVALIDGKYHEVDSSEMAFKIAGSIGFKGAAKKANPVLLEPIMKVEVITPEEYLGDVMGDLSGRRGHIEGMGERAGAQFVKAKVPLSEMFGYSTTLRSMTQGRANYSMEFETYREVPRNIAETLQEKRVGKDSE.

In terms of domain architecture, tr-type G spans 8-291 (DKVRNIGIMA…AVIDYLASPV (284 aa)). GTP-binding positions include 17–24 (AHIDAGKT), 90–94 (DTPGH), and 144–147 (NKMD).

This sequence belongs to the TRAFAC class translation factor GTPase superfamily. Classic translation factor GTPase family. EF-G/EF-2 subfamily.

The protein resides in the cytoplasm. Catalyzes the GTP-dependent ribosomal translocation step during translation elongation. During this step, the ribosome changes from the pre-translocational (PRE) to the post-translocational (POST) state as the newly formed A-site-bound peptidyl-tRNA and P-site-bound deacylated tRNA move to the P and E sites, respectively. Catalyzes the coordinated movement of the two tRNA molecules, the mRNA and conformational changes in the ribosome. This Chlorobaculum parvum (strain DSM 263 / NCIMB 8327) (Chlorobium vibrioforme subsp. thiosulfatophilum) protein is Elongation factor G.